Reading from the N-terminus, the 344-residue chain is MEIRIMLFILMMMVMPVSYAACYSELSVQHNLVVQGDFALTQTQMATYEHNFNDSSCVSTNTITPMSPSDIIVGLYNDTIKLNLHFEWTNKNNITLSNNQTSFTSGYSVTVTPAASNAKVNVSAGGGGSVMINGVATLSSASSSTRGSAAVQFLLCLLGGKSWDACVNSYRNALAQNAGVYSFNLTLSYNPITTTCKPDDLLITLDSIPVSQLPATGNKATINSKQGDIILRCKNLLGQQNQTSRKMQVYLSSSDLLTNSNTILKGAEDNGVGFILESNGSPVTLLNITNSSKGYTNLKEVAAKSKLTDTTVSIPITASYYVYDTNKVKSGALEATALINVKYD.

A signal peptide spans 1 to 20 (MEIRIMLFILMMMVMPVSYA).

The protein belongs to the fimbrial protein family.

Functionally, part of the yehABCD fimbrial operon. Could contribute to adhesion to various surfaces in specific environmental niches. This is an uncharacterized protein from Escherichia coli (strain K12).